A 158-amino-acid polypeptide reads, in one-letter code: MQGRLSAWLVKHGLIHRSLGFDYQGIETLQIKPEDWHSIAVIFYVYGYNYLRSQCAYDVAPGGLLASVYHLTRIEDGVDQPEELCIKVFASRRNPRIPSVFWVWKSVDFQERESYDMLGISYDNHPRLKRILMPESWIGWPLRKDYIAPNFYEIQEAH.

This sequence belongs to the complex I 30 kDa subunit family. In terms of assembly, NDH is composed of at least 16 different subunits, 5 of which are encoded in the nucleus.

It is found in the plastid. It localises to the chloroplast thylakoid membrane. It catalyses the reaction a plastoquinone + NADH + (n+1) H(+)(in) = a plastoquinol + NAD(+) + n H(+)(out). The enzyme catalyses a plastoquinone + NADPH + (n+1) H(+)(in) = a plastoquinol + NADP(+) + n H(+)(out). In terms of biological role, NDH shuttles electrons from NAD(P)H:plastoquinone, via FMN and iron-sulfur (Fe-S) centers, to quinones in the photosynthetic chain and possibly in a chloroplast respiratory chain. The immediate electron acceptor for the enzyme in this species is believed to be plastoquinone. Couples the redox reaction to proton translocation, and thus conserves the redox energy in a proton gradient. This Solanum bulbocastanum (Wild potato) protein is NAD(P)H-quinone oxidoreductase subunit J, chloroplastic.